Consider the following 791-residue polypeptide: Metabotropic glutamate receptor-like protein D (791 aa).

A signal peptide spans 1–22 (MKINSFLIILILLFISIKNSNG). Topologically, residues 23 to 390 (EPEKKFKLIT…TEVYQSRPIQ (368 aa)) are extracellular. Asn-72, Asn-168, Asn-279, Asn-290, Asn-306, and Asn-349 each carry an N-linked (GlcNAc...) asparagine glycan. Residues 391-411 (IAISSISSFFIVTVLVMMGLV) form a helical membrane-spanning segment. Residues 412–424 (VRFRKNPSIRSAS) are Cytoplasmic-facing. A helical membrane pass occupies residues 425 to 445 (PIFLNFILFGALIIYVGIIIW). Over 446–453 (SSSINSAS) the chain is Extracellular. The chain crosses the membrane as a helical span at residues 454–474 (CNAQFWLVTLGFTTLIGSLVV). The Cytoplasmic segment spans residues 475–495 (KNVRIWLIFDNPELKLVKITN). The chain crosses the membrane as a helical span at residues 496-516 (LQLVPWVGVCLVINIILMSIL). Topologically, residues 517-550 (TSVGDLREVNAQGIDSLGKYEFMRICKMNSSGAS) are extracellular. An N-linked (GlcNAc...) asparagine glycan is attached at Asn-545. Residues 551–571 (TLYTILAYFAALLLIGVFVSW) form a helical membrane-spanning segment. Residues 572–585 (KIRIVDILEFNESK) are Cytoplasmic-facing. The chain crosses the membrane as a helical span at residues 586-606 (AIANTLYAISFCLFVIVPLMI). Residues 607–615 (SPQDKQSEK) are Extracellular-facing. Residues 616–636 (IILCIAGLFIVTAAVLIIFVP) traverse the membrane as a helical segment. Over 637 to 791 (KFYRVYIFGS…KNEENNDGDN (155 aa)) the chain is Cytoplasmic. Disordered regions lie at residues 664–715 (TARA…SEPN) and 746–791 (IITE…DGDN). Positions 674-689 (SSGGGAGSGGATGGSG) are enriched in gly residues. Over residues 749–760 (ENGQDSNNNNNN) the composition is skewed to low complexity. Positions 752-781 (QDSNNNNNNEENKDNNIENNKISEEIKENL) form a coiled coil. A compositionally biased stretch (basic and acidic residues) spans 761-785 (EENKDNNIENNKISEEIKENLKNEE).

It in the N-terminal section; belongs to the BMP lipoprotein family. This sequence in the C-terminal section; belongs to the G-protein coupled receptor 3 family. GABA-B receptor subfamily.

The protein resides in the membrane. This Dictyostelium discoideum (Social amoeba) protein is Metabotropic glutamate receptor-like protein D (grlD).